An 85-amino-acid chain; its full sequence is MKTFSVAVAVAVVLAFICLQESSAVPANEEQELEQQIYFADPEMPVESCKMPYYMRENRQGSPARCRFCCRCCPRMRGCGICCRF.

An N-terminal signal peptide occupies residues 1–24 (MKTFSVAVAVAVVLAFICLQESSA). Residues 25–64 (VPANEEQELEQQIYFADPEMPVESCKMPYYMRENRQGSPA) constitute a propeptide that is removed on maturation. Intrachain disulfides connect C66-C83, C69-C72, C70-C79, and C73-C82.

Monomer. Expressed in all tissues tested, with highest levels of expression in kidney and lowest levels in liver. Intra-peritoneal injection of lipopolysaccharide results in increased expression in heart, spleen and stomach, but not in kidney or liver.

It localises to the secreted. Seems to act as a signaling molecule involved in the maintenance of iron homeostasis. Seems to be required in conjunction with HFE to regulate both intestinal iron absorption and iron storage in macrophages. In terms of biological role, has very strong antibacterial activity against the marine Gram-negative bacteria V.alginolyticus (MIC=24 uM), V.fluvialis, V.harveyis (MIC=12 uM) and V.parahaemolyticus (MIC=6 uM). Has antibacterial activity against the Gram-negative bacteria A.hydrophila (MIC=6 uM), E.coli (MIC=24 uM), and E.coli BL21(DE3)plysS (MIC=6 uM), and the Gram-positive bacteria B.cereus (MIC=24 uM), B.subtilis (MIC=6 uM), C.glutamicum (MIC=3 uM), M.luteus (MIC=3 uM), M.lysodeikticus, S.aureus (MIC=6 uM) and S.epidermis (MIC=12 uM). Possesses antifungal activity against A.niger (MIC=24 uM), F.graminearum (MIC24 uM) and F.solani (MIC=24 uM), but lacks antifungal activity against the yeasts P.pastoris GS115 and C.albicans. The sequence is that of Hepcidin from Larimichthys crocea (Large yellow croaker).